The following is a 340-amino-acid chain: HTH-type transcriptional regulator PtxS (340 aa).

Positions 12 to 67 constitute an HTH lacI-type domain; the sequence is VTINQVAEAAGVSKASVSRYIGGDRQLLADATARRIERAIDQLDYRPNQMARGLKR. Residues 14–33 constitute a DNA-binding region (H-T-H motif); that stretch reads INQVAEAAGVSKASVSRYIG.

Interacts with PtxR in the absence of 2-ketogluconate. Binding of the 2-ketogluconate effector to PtxS causes PtxS/PtxR complex dissociation.

2-ketogluconate acts as a molecular effector and causes dissociation of the PtxS/PtxR complex. Its function is as follows. Negatively regulates glucose metabolism by binding directly to the promoter region of the kgu and gad operons. It also negatively regulates its own synthesis. In terms of biological role, in addition, in pathogenic strains, PtxS modulates PtxR activity in response to 2-ketogluconate. In the presence of PtxR, which also binds to the kgu and gad promoter regions, PtxS and PtxR form a tight complex, creating a DNA-loop that prevents RNA polymerase promoter access and expression of the glucose metabolism genes. Binding of the 2-ketogluconate effector to PtxS causes PtxS/PtxR complex dissociation and leads to the dissolution of the repression DNA-loop, facilitating the entry of the RNA polymerase and enabling the transcription of the genes. Also plays an important role in the regulation of the expression of the virulence factor exotoxin A (toxA). PtxS does not bind directly to the toxA promoter but negatively regulates the production of exotoxin A by binding to PtxR and interfering with its positive regulator activity. In the presence of 2-ketogluconate, PtxS is released and PtxR can recruit RNA polymerase. The chain is HTH-type transcriptional regulator PtxS from Pseudomonas aeruginosa (strain ATCC 15692 / DSM 22644 / CIP 104116 / JCM 14847 / LMG 12228 / 1C / PRS 101 / PAO1).